We begin with the raw amino-acid sequence, 141 residues long: MGLRSCTHLATLFMTLWAVAFCFLVVVPIPAQTTSLQNAKDDRRLQELESKIGAESDQTNANLVGPSFSRFGDRRNQKAISFGRRVPLISRPMIPIELDLLMDNDDERTKAKRFDDYGHMRFGKRGGDDQFDDYGHMRFGR.

Positions 1–31 are cleaved as a signal peptide; sequence MGLRSCTHLATLFMTLWAVAFCFLVVVPIPA. Residues 32-73 constitute a propeptide that is removed on maturation; the sequence is QTTSLQNAKDDRRLQELESKIGAESDQTNANLVGPSFSRFGD. Position 82 is a phenylalanine amide (F82). Residues 86–111 constitute a propeptide that is removed on maturation; the sequence is VPLISRPMIPIELDLLMDNDDERTKA. Y117 is modified (sulfotyrosine). F122 carries the phenylalanine amide modification. Position 134 is a sulfotyrosine (Y134). F139 carries the phenylalanine amide modification.

Belongs to the gastrin/cholecystokinin family.

The protein localises to the secreted. Drosulfakinin-0 (DSK 0) plays diverse biological roles including regulating gut muscle contraction in adults but not in larvae. This chain is Drosulfakinins, found in Drosophila simulans (Fruit fly).